Reading from the N-terminus, the 182-residue chain is Triplatin (182 aa).

Residues 1–18 form the signal peptide; that stretch reads MKMIIAVTFLGIVTIAFA. Intrachain disulfides connect C21/C133, C55/C177, and C88/C105.

Belongs to the calycin superfamily. Triabin family. Expressed in salivary glands.

It localises to the secreted. Functionally, inhibits platelet aggregation and vasoconstriction through binding to distinct eicosanoids involved in inflammation (acts as a scavenger), and has a role in inhibiting host innate immunity by impairing platelet-assisted formation of neutrophil extracellular traps (NETs). Inhibits platelet aggregation by collagen, and low doses of thromboxane A2 mimetic (TXA2 mimetic), and arachidonic acid (AA) without affecting aggregation induced by ADP, convulxin (GP6 agonist), and PMA. Binds to TXA2, TXB2, prostaglandine H2 mimetic (PGH2 mimetic), PGJ2, and PGF2alpha. Binding is not observed to leukotrienes, AA, and biogenic amines (PGE1, 5(S)-HETE, 12(S)-HETE, 20-HETE, norepinephrine, epinephrine, serotonin, LTC4 and ADP). Induces relaxation of aorta rat previously contracted with TXA2 mimetic. Moreover, it also impairs platelet-assisted formation of neutrophil extracellular traps (NETs). NETs are web-like structures of DNA and proteins that play an important role in killing of pathogens. In addition, NETs are implicated in thrombus formation. In vivo, this protein exhibits antithrombotic activity in two distinct mice models that are highly dependent on platelets. It is noteworthy that it inhibits thrombosis without promoting excessive bleeding. This chain is Triplatin, found in Triatoma infestans (Assassin bug).